The chain runs to 149 residues: Transcriptional repressor NrdR (149 aa).

A zinc finger spans residues 3–34 (CPFCSATDTKVIDSRLVADGHQVRRRRECVQC). The ATP-cone domain maps to 49 to 139 (PRVVKQDGSR…VYRAFEDVSE (91 aa)).

This sequence belongs to the NrdR family. It depends on Zn(2+) as a cofactor.

In terms of biological role, negatively regulates transcription of bacterial ribonucleotide reductase nrd genes and operons by binding to NrdR-boxes. The protein is Transcriptional repressor NrdR of Shewanella halifaxensis (strain HAW-EB4).